The sequence spans 521 residues: U4/U6 small nuclear ribonucleoprotein Prp4 (521 aa).

N6-acetyllysine is present on Lys-26. 7 WD repeats span residues 228–267, 270–317, 320–359, 362–401, 404–443, 446–486, and 489–521; these read GDDRPISYCHFSPNSKMLATACWSGLCKLWSVPDCNLLHT, GHNT…PVAD, GHTVRVARVMWHPSGRFLGTTCYDRSWRLWDLEAQEEILH, GHSMGVYDIAFHQDGSLAGTGGLDAFGRVWDLRTGRCIMF, GHLKEIYGINFSPNGYHIATGSGDNTCKVWDLRQRRCVYT, AHQN…PLKT, and GHEGKVMGLDISSDGQLIATCSYDRTFKLWMAE.

As to quaternary structure, component of the precatalytic spliceosome (spliceosome B complex). Component of the U4/U6-U5 tri-snRNP complex, a building block of the precatalytic spliceosome (spliceosome B complex). The U4/U6-U5 tri-snRNP complex is composed of the U4, U6 and U5 snRNAs and at least PRPF3, PRPF4, PRPF6, PRPF8, PRPF31, SNRNP200, TXNL4A, SNRNP40, SNRPB, SNRPD1, SNRPD2, SNRPD3, SNRPE, SNRPF, SNRPG, DDX23, CD2BP2, PPIH, SNU13, EFTUD2, SART1 and USP39, plus LSM2, LSM3, LSM4, LSM5, LSM6, LSM7 and LSM8. Interacts directly with PRPF18, PPIH and PRPF3. Part of a heteromeric complex containing PPIH, PRPF3 and PRPF4 that is stable in the absence of RNA. Interacts with ERCC6.

It localises to the nucleus. Its subcellular location is the nucleus speckle. Plays a role in pre-mRNA splicing as component of the U4/U6-U5 tri-snRNP complex that is involved in spliceosome assembly, and as component of the precatalytic spliceosome (spliceosome B complex). This chain is U4/U6 small nuclear ribonucleoprotein Prp4 (PRPF4), found in Pongo abelii (Sumatran orangutan).